The primary structure comprises 1216 residues: Phospholipase D B (1216 aa).

The span at Met-1–His-14 shows a compositional bias: polar residues. The segment at Met-1–Ser-48 is disordered. The span at Gln-17–Arg-33 shows a compositional bias: basic and acidic residues. 2 consecutive EF-hand domains span residues Arg-196–Gly-231 and Thr-232–Ile-267. Positions 209, 211, 213, 215, and 220 each coordinate Ca(2+). Residues Glu-347 to Arg-462 form the PH domain. The PLD phosphodiesterase 1 domain occupies Leu-585–Arg-612. Residues His-590, Lys-592, and Asp-597 contribute to the active site. A disordered region spans residues Val-732 to Asn-844. Low complexity predominate over residues Asn-776–Ser-789. The span at Glu-790–Lys-813 shows a compositional bias: acidic residues. In terms of domain architecture, PLD phosphodiesterase 2 spans Glu-1036–Ser-1063. Catalysis depends on residues His-1041, Lys-1043, and Asp-1048.

It belongs to the phospholipase D family.

The protein localises to the cytoplasmic vesicle. It localises to the cytoplasm. It is found in the cell cortex. It catalyses the reaction a 1,2-diacyl-sn-glycero-3-phosphocholine + H2O = a 1,2-diacyl-sn-glycero-3-phosphate + choline + H(+). Inhibited by butan-1-ol. Plays a role in cell growth. Hydrolyzes membrane phospholipids, such as PtdCho (phosphatidylcholine), producing the free headgroup and PtdOH (phosphatidic acid; signaling molecule on its own). Involved in the inhibition of actin-based motility and endocytosis. Its inhibition causes complete collapse of F-actin organization. Plays an important role in cell migration by localizing along the anterior cell membrane. Overexpression leads to the inability to aggregate even at higher cell density. Also known as a negative regulator of quorum sensing. This chain is Phospholipase D B (pldB), found in Dictyostelium discoideum (Social amoeba).